A 103-amino-acid polypeptide reads, in one-letter code: Large ribosomal subunit protein bL21 (103 aa).

It belongs to the bacterial ribosomal protein bL21 family. Part of the 50S ribosomal subunit. Contacts protein L20.

In terms of biological role, this protein binds to 23S rRNA in the presence of protein L20. The protein is Large ribosomal subunit protein bL21 of Shewanella amazonensis (strain ATCC BAA-1098 / SB2B).